Here is a 545-residue protein sequence, read N- to C-terminus: MTTRYIFVTGGVVSSLGKGIAAASLAAILEARGLNVTIMKLDPYINVDPGTMSPTQHGEVFVTEDGAETDLDLGHYERFIRTKMNRRNNFTTGRIYEEVLRKERRGDYLGATIQVIPHITNAIKEKVLAGGEGHDVAIVEIGGTVGDIESLPFLESIRQLGVELGRDRTLFMHLTLVPFLGAAGEVKTKPTQHSVKELRSIGIAPDVLVCRGDRAIPANEKAKISLFCNVEERAVISLKDVDSIYKIPALLRSQGLDDLVVKRFGLECREADLSEWENVIYQEANPNGEVVIGMVGKYIELPDAYKSVNEALKHAGLKNRVSVTIKYIDSQTVEAKGEEVLQGLDGILVPGGFGERGVEGKILAAKFARENNLPYFGICLGMQVALIEFARNVAGMADAHSTEFNKETPFPVVGLITEWIDEEGNVEQRHEASDLGGTMRLGAQLCHLLDGSKAAQAYKGNSCVERHRHRYEVNNKYRERLEQAGMIFSGLSSDRKLVEMIELKDHPWFVAGQFHPEFTSTPRDGHPLFEGFIAAASAHQKRDLK.

Residues 1–266 are amidoligase domain; the sequence is MTTRYIFVTG…DDLVVKRFGL (266 aa). Serine 14 is a binding site for CTP. Serine 14 contributes to the UTP binding site. ATP is bound by residues 15 to 20 and aspartate 72; that span reads SLGKGI. Mg(2+) is bound by residues aspartate 72 and glutamate 140. Residues 147 to 149, 187 to 192, and lysine 223 each bind CTP; these read DIE and KTKPTQ. Residues 187–192 and lysine 223 contribute to the UTP site; that span reads KTKPTQ. ATP is bound at residue 239-241; sequence KDV. A Glutamine amidotransferase type-1 domain is found at 291–542; that stretch reads VIGMVGKYIE…IAAASAHQKR (252 aa). L-glutamine is bound at residue glycine 352. Residue cysteine 379 is the Nucleophile; for glutamine hydrolysis of the active site. Residues 380–383, glutamate 403, and arginine 470 contribute to the L-glutamine site; that span reads LGMQ. Residues histidine 515 and glutamate 517 contribute to the active site.

It belongs to the CTP synthase family. In terms of assembly, homotetramer.

The catalysed reaction is UTP + L-glutamine + ATP + H2O = CTP + L-glutamate + ADP + phosphate + 2 H(+). It catalyses the reaction L-glutamine + H2O = L-glutamate + NH4(+). The enzyme catalyses UTP + NH4(+) + ATP = CTP + ADP + phosphate + 2 H(+). It functions in the pathway pyrimidine metabolism; CTP biosynthesis via de novo pathway; CTP from UDP: step 2/2. With respect to regulation, allosterically activated by GTP, when glutamine is the substrate; GTP has no effect on the reaction when ammonia is the substrate. The allosteric effector GTP functions by stabilizing the protein conformation that binds the tetrahedral intermediate(s) formed during glutamine hydrolysis. Inhibited by the product CTP, via allosteric rather than competitive inhibition. Its function is as follows. Catalyzes the ATP-dependent amination of UTP to CTP with either L-glutamine or ammonia as the source of nitrogen. Regulates intracellular CTP levels through interactions with the four ribonucleotide triphosphates. The protein is CTP synthase of Shewanella baltica (strain OS155 / ATCC BAA-1091).